The sequence spans 1409 residues: L-2-aminoadipate reductase large subunit (1409 aa).

The 80-residue stretch at 858–937 folds into the Carrier domain; sequence QALSETEQTL…GFASEIDRLL (80 aa). Serine 896 is subject to O-(pantetheine 4'-phosphoryl)serine.

This sequence belongs to the ATP-dependent AMP-binding enzyme family. As to quaternary structure, heterodimer of an alpha and a beta subunit. Pantetheine 4'-phosphate is required as a cofactor.

The catalysed reaction is (S)-2-amino-6-oxohexanoate + NADP(+) + H2O = L-2-aminoadipate + NADPH + 2 H(+). It catalyses the reaction (S)-2-amino-6-oxohexanoate + NAD(+) + H2O = L-2-aminoadipate + NADH + 2 H(+). The enzyme catalyses (S)-2-amino-6-oxohexanoate + AMP + diphosphate + NADP(+) = L-2-aminoadipate + ATP + NADPH + H(+). The protein operates within amino-acid biosynthesis; L-lysine biosynthesis via AAA pathway; L-lysine from L-alpha-aminoadipate (fungal route): step 1/3. Catalyzes the activation of alpha-aminoadipate by ATP-dependent adenylation and the reduction of activated alpha-aminoadipate by NADPH. The activated alpha-aminoadipate is bound to the phosphopantheinyl group of the enzyme itself before it is reduced to (S)-2-amino-6-oxohexanoate. The polypeptide is L-2-aminoadipate reductase large subunit (lys2) (Penicillium chrysogenum (Penicillium notatum)).